We begin with the raw amino-acid sequence, 887 residues long: 3-hydroxy-3-methylglutaryl-coenzyme A reductase (887 aa).

Residues 1-9 (MLSRLFRMH) lie on the Cytoplasmic side of the membrane. Residues 10–39 (GLFVASHPWEVIVGTVTLTICMMSMNMFTG) traverse the membrane as a helical segment. Over 40–56 (NNKICGWNYECPKFEED) the chain is Lumenal. Residues 57–78 (VLSSDIIILTITRCIAILYIYF) traverse the membrane as a helical segment. In terms of domain architecture, SSD spans 61–218 (DIIILTITRC…MTFFPACVSL (158 aa)). Residues 75 to 78 (YIYF) carry the INSIG-binding motif motif. The Cytoplasmic segment spans residues 79-89 (QFQNLRQLGSK). Residue Lys89 forms a Glycyl lysine isopeptide (Lys-Gly) (interchain with G-Cter in ubiquitin) linkage. A helical transmembrane segment spans residues 90 to 114 (YILGIAGLFTIFSSFVFSTVVIHFL). Over 115–123 (DKELTGLNE) the chain is Lumenal. The helical transmembrane segment at 124–149 (ALPFFLLLIDLSRASALAKFALSSNS) threads the bilayer. The Cytoplasmic portion of the chain corresponds to 150 to 159 (QDEVRENIAR). The helical transmembrane segment at 160–187 (GMAILGPTFTLDALVECLVIGVGTMSGV) threads the bilayer. Residues 188–191 (RQLE) lie on the Lumenal side of the membrane. The helical transmembrane segment at 192-220 (IMCCFGCMSVLANYFVFMTFFPACVSLVL) threads the bilayer. Residues 221 to 248 (ELSRESREGRPIWQLSHFARVLEEEENK) lie on the Cytoplasmic side of the membrane. A Glycyl lysine isopeptide (Lys-Gly) (interchain with G-Cter in ubiquitin) cross-link involves residue Lys248. Residues 249–275 (PNPVTQRVKMIMSLGLVLVHAHSRWIA) traverse the membrane as a helical segment. Topologically, residues 276–314 (DPSPQNSTAEQSKVSLGLAEDVSKRIEPSVSLWQFYLSK) are lumenal. Residue Asn281 is glycosylated (N-linked (GlcNAc...) asparagine). A helical membrane pass occupies residues 315-339 (MISMDIEQVITLSLALLLAVKYIFF). Topologically, residues 340–887 (EQAETESTLS…LQGTCTKKAA (548 aa)) are cytoplasmic. Catalysis depends on charge relay system residues Glu558, Lys690, and Asp766. The active-site Proton donor is His865. A Phosphoserine; by AMPK modification is found at Ser871.

Belongs to the HMG-CoA reductase family. In terms of assembly, homotetramer. Homodimer. Interacts (via its SSD) with INSIG1; the interaction, accelerated by sterols, leads to the recruitment of HMGCR to AMFR/gp78 for its ubiquitination by the sterol-mediated ERAD pathway. Interacts with UBIAD1. Undergoes sterol-mediated ubiquitination and ER-associated degradation (ERAD). Accumulation of sterols in the endoplasmic reticulum (ER) membrane, triggers binding of the reductase to the ER membrane protein INSIG1 or INSIG2. The INSIG1 binding leads to the recruitment of the ubiquitin ligase, AMFR/gp78, RNF139 or RNF145, initiating ubiquitination of the reductase. The ubiquitinated reductase is then extracted from the ER membrane and delivered to cytosolic 26S proteosomes by a mechanism probably mediated by the ATPase Valosin-containing protein VCP/p97. The INSIG2-binding leads to the recruitment of the ubiquitin ligase RNF139, initiating ubiquitination of the reductase. Lys-248 is the main site of ubiquitination. Ubiquitination is enhanced by the presence of a geranylgeranylated protein. In terms of processing, N-glycosylated. Deglycosylated by NGLY1 on release from the endoplasmic reticulum (ER) in a sterol-mediated manner. Post-translationally, phosphorylated. Phosphorylation at Ser-871 reduces the catalytic activity.

The protein localises to the endoplasmic reticulum membrane. It is found in the peroxisome membrane. The enzyme catalyses (R)-mevalonate + 2 NADP(+) + CoA = (3S)-3-hydroxy-3-methylglutaryl-CoA + 2 NADPH + 2 H(+). It functions in the pathway metabolic intermediate biosynthesis; (R)-mevalonate biosynthesis; (R)-mevalonate from acetyl-CoA: step 3/3. Regulated by a negative feedback mechanism through sterols and non-sterol metabolites derived from mevalonate. Phosphorylation at Ser-871 down-regulates the catalytic activity. In terms of biological role, catalyzes the conversion of (3S)-hydroxy-3-methylglutaryl-CoA (HMG-CoA) to mevalonic acid, the rate-limiting step in the synthesis of cholesterol and other isoprenoids, thus plays a critical role in cellular cholesterol homeostasis. This chain is 3-hydroxy-3-methylglutaryl-coenzyme A reductase (Hmgcr), found in Rattus norvegicus (Rat).